A 346-amino-acid polypeptide reads, in one-letter code: F(420)H(2) dehydrogenase subunit H (346 aa).

The next 8 helical transmembrane spans lie at 18-38 (GIVG…AVWL), 91-111 (IFML…AVFI), 125-145 (ISVL…FMVA), 170-190 (PLGI…IVDI), 196-216 (LHWN…SLMA), 257-277 (ILGS…PGFI), 284-304 (GIIV…MVII), and 326-346 (LLPL…YLGA).

This sequence belongs to the complex I subunit 1 family. In terms of assembly, the FPO complex is composed of at least 13 different subunits. FpoA, FpoH, FpoJ, FpoK, FpoL, FpoM and FpoN proteins constitute the membrane sector of the complex.

Its subcellular location is the cell membrane. The catalysed reaction is methanophenazine + reduced coenzyme F420-(gamma-L-Glu)(n) = dihydromethanophenazine + oxidized coenzyme F420-(gamma-L-Glu)(n) + H(+). Component of the F(420)H(2) dehydrogenase (FPO complex) which is part of the energy-conserving F(420)H(2):heterodisulfide oxidoreductase system. The membrane-bound electron transfer system of the complex plays an important role in the metabolism of methylotrophic methanogens when the organisms grow on methanol or methylamines. Catalyzes the oxidation of methanophenazine to dihydromethanophenazine. It shuttles electrons from F(420)H(2), via FAD and iron-sulfur (Fe-S) centers, to methanophenazine (an electron carrier in the membrane). It couples the redox reaction to proton translocation (for every two electrons transferred, two hydrogen ions are translocated across the cytoplasmic membrane), and thus conserves the redox energy in a proton gradient. This Methanosarcina barkeri (strain Fusaro / DSM 804) protein is F(420)H(2) dehydrogenase subunit H.